The primary structure comprises 473 residues: Photosystem II CP43 reaction center protein (473 aa).

Positions Met1–Glu14 are excised as a propeptide. Thr15 carries the N-acetylthreonine modification. Residue Thr15 is modified to Phosphothreonine. 5 helical membrane-spanning segments follow: residues Leu69–Ala93, Leu134–Asn155, Lys178–Thr200, Lys255–Ser275, and Trp291–Ala312. [CaMn4O5] cluster is bound at residue Glu367. Residues Arg447–Pro471 form a helical membrane-spanning segment.

It belongs to the PsbB/PsbC family. PsbC subfamily. In terms of assembly, PSII is composed of 1 copy each of membrane proteins PsbA, PsbB, PsbC, PsbD, PsbE, PsbF, PsbH, PsbI, PsbJ, PsbK, PsbL, PsbM, PsbT, PsbX, PsbY, PsbZ, Psb30/Ycf12, at least 3 peripheral proteins of the oxygen-evolving complex and a large number of cofactors. It forms dimeric complexes. Requires Binds multiple chlorophylls and provides some of the ligands for the Ca-4Mn-5O cluster of the oxygen-evolving complex. It may also provide a ligand for a Cl- that is required for oxygen evolution. PSII binds additional chlorophylls, carotenoids and specific lipids. as cofactor.

It localises to the plastid. Its subcellular location is the chloroplast thylakoid membrane. Its function is as follows. One of the components of the core complex of photosystem II (PSII). It binds chlorophyll and helps catalyze the primary light-induced photochemical processes of PSII. PSII is a light-driven water:plastoquinone oxidoreductase, using light energy to abstract electrons from H(2)O, generating O(2) and a proton gradient subsequently used for ATP formation. This chain is Photosystem II CP43 reaction center protein, found in Physcomitrium patens (Spreading-leaved earth moss).